Reading from the N-terminus, the 333-residue chain is Serine/threonine-protein phosphatase PP1-beta (333 aa).

4 residues coordinate Mn(2+): Asp63, His65, Asp91, and Asn123. His124 (proton donor) is an active-site residue. The Mn(2+) site is built by His172 and His247. Residues Gly306–Lys333 are disordered. Over residues Ala322 to Lys333 the composition is skewed to low complexity.

This sequence belongs to the PPP phosphatase family. PP-1 subfamily. As to quaternary structure, interacts with lab-1; the interaction is direct. Interacts with knl-1; the interaction is direct. It depends on Mn(2+) as a cofactor.

It is found in the cytoplasm. It localises to the nucleus. It catalyses the reaction O-phospho-L-seryl-[protein] + H2O = L-seryl-[protein] + phosphate. The catalysed reaction is O-phospho-L-threonyl-[protein] + H2O = L-threonyl-[protein] + phosphate. Serine/threonine-protein phosphatase essential for chromosomal dynamics during meiosis and mitosis. Antagonizes the function of air-2 in the regulation of chromosome cohesion. Dephosphorylates histone H3 at 'Ser-10'. Also involved in the activation of chloride channel clh-3 during cell swelling and meiotic maturation. Essential for embryogenesis. The sequence is that of Serine/threonine-protein phosphatase PP1-beta (gsp-2) from Caenorhabditis briggsae.